The sequence spans 530 residues: Phosphoenolpyruvate carboxykinase (ATP) 2 (530 aa).

Substrate is bound by residues Arg54, Tyr191, and Lys197. ATP contacts are provided by residues Lys197, His216, and 232–240; that span reads GLSGTGKTT. Mn(2+) is bound by residues Lys197 and His216. Residue Asp253 participates in Mn(2+) binding. Residues Glu281, Arg318, 437 to 438, and Thr443 each bind ATP; that span reads RV. Arg318 contributes to the substrate binding site.

The protein belongs to the phosphoenolpyruvate carboxykinase (ATP) family. Requires Mn(2+) as cofactor.

It is found in the cytoplasm. It catalyses the reaction oxaloacetate + ATP = phosphoenolpyruvate + ADP + CO2. It participates in carbohydrate biosynthesis; gluconeogenesis. In terms of biological role, involved in the gluconeogenesis. Catalyzes the conversion of oxaloacetate (OAA) to phosphoenolpyruvate (PEP) through direct phosphoryl transfer between the nucleoside triphosphate and OAA. The polypeptide is Phosphoenolpyruvate carboxykinase (ATP) 2 (Salinibacter ruber (strain DSM 13855 / M31)).